We begin with the raw amino-acid sequence, 189 residues long: uncharacterized protein (189 aa).

Basic and acidic residues predominate over residues 1–15; it reads MDKHGVKTPLWRKEV. A disordered region spans residues 1-77; it reads MDKHGVKTPL…SPLRQESSSQ (77 aa). Acidic residues-rich tracts occupy residues 16-29 and 46-56; these read EDPE…EDDS and SATETEEDSRD. Residues 65–77 are compositionally biased toward polar residues; it reads VSYSPLRQESSSQ.

This is an uncharacterized protein from Mus musculus (Mouse).